The following is a 556-amino-acid chain: Formate--tetrahydrofolate ligase (556 aa).

Position 65-72 (65-72 (TPAGEGKT)) interacts with ATP.

The protein belongs to the formate--tetrahydrofolate ligase family.

The enzyme catalyses (6S)-5,6,7,8-tetrahydrofolate + formate + ATP = (6R)-10-formyltetrahydrofolate + ADP + phosphate. The protein operates within one-carbon metabolism; tetrahydrofolate interconversion. This is Formate--tetrahydrofolate ligase from Acetivibrio thermocellus (strain ATCC 27405 / DSM 1237 / JCM 9322 / NBRC 103400 / NCIMB 10682 / NRRL B-4536 / VPI 7372) (Clostridium thermocellum).